The chain runs to 125 residues: Fluoride-specific ion channel FluC (125 aa).

The next 4 helical transmembrane spans lie at 4–24 (IALV…VGVW), 35–55 (WGTL…VELV), 68–88 (FLVT…LDAV), and 100–120 (AFYI…GLAL). 2 residues coordinate Na(+): glycine 75 and threonine 78.

Belongs to the fluoride channel Fluc/FEX (TC 1.A.43) family.

It localises to the cell inner membrane. The enzyme catalyses fluoride(in) = fluoride(out). With respect to regulation, na(+) is not transported, but it plays an essential structural role and its presence is essential for fluoride channel function. Its function is as follows. Fluoride-specific ion channel. Important for reducing fluoride concentration in the cell, thus reducing its toxicity. The sequence is that of Fluoride-specific ion channel FluC from Agrobacterium fabrum (strain C58 / ATCC 33970) (Agrobacterium tumefaciens (strain C58)).